The sequence spans 320 residues: GTP 3',8-cyclase (320 aa).

One can recognise a Radical SAM core domain in the interval 4–227 (LYSRRINYMR…METEKSSPAK (224 aa)). Arginine 13 contacts GTP. 2 residues coordinate [4Fe-4S] cluster: cysteine 20 and cysteine 24. Tyrosine 26 is a binding site for S-adenosyl-L-methionine. Cysteine 27 is a [4Fe-4S] cluster binding site. Arginine 63 is a binding site for GTP. S-adenosyl-L-methionine is bound at residue glycine 67. Position 94 (threonine 94) interacts with GTP. Position 118 (serine 118) interacts with S-adenosyl-L-methionine. Lysine 155 contacts GTP. Methionine 189 provides a ligand contact to S-adenosyl-L-methionine. Residues cysteine 249 and cysteine 252 each contribute to the [4Fe-4S] cluster site. 254-256 (RVR) contributes to the GTP binding site. [4Fe-4S] cluster is bound at residue cysteine 266. Basic and acidic residues predominate over residues 300–312 (KHDLLTDSHEESN). Residues 300 to 320 (KHDLLTDSHEESNRGMSQIGG) are disordered.

The protein belongs to the radical SAM superfamily. MoaA family. Monomer and homodimer. It depends on [4Fe-4S] cluster as a cofactor.

It carries out the reaction GTP + AH2 + S-adenosyl-L-methionine = (8S)-3',8-cyclo-7,8-dihydroguanosine 5'-triphosphate + 5'-deoxyadenosine + L-methionine + A + H(+). Its pathway is cofactor biosynthesis; molybdopterin biosynthesis. Functionally, catalyzes the cyclization of GTP to (8S)-3',8-cyclo-7,8-dihydroguanosine 5'-triphosphate. The protein is GTP 3',8-cyclase of Alkaliphilus oremlandii (strain OhILAs) (Clostridium oremlandii (strain OhILAs)).